A 184-amino-acid polypeptide reads, in one-letter code: ATP synthase subunit b 1 (184 aa).

The chain crosses the membrane as a helical span at residues 4 to 24; it reads LSILAALAASPAMAATGPFFS.

Belongs to the ATPase B chain family. As to quaternary structure, F-type ATPases have 2 components, F(1) - the catalytic core - and F(0) - the membrane proton channel. F(1) has five subunits: alpha(3), beta(3), gamma(1), delta(1), epsilon(1). F(0) has three main subunits: a(1), b(2) and c(10-14). The alpha and beta chains form an alternating ring which encloses part of the gamma chain. F(1) is attached to F(0) by a central stalk formed by the gamma and epsilon chains, while a peripheral stalk is formed by the delta and b chains.

The protein resides in the cell inner membrane. Functionally, f(1)F(0) ATP synthase produces ATP from ADP in the presence of a proton or sodium gradient. F-type ATPases consist of two structural domains, F(1) containing the extramembraneous catalytic core and F(0) containing the membrane proton channel, linked together by a central stalk and a peripheral stalk. During catalysis, ATP synthesis in the catalytic domain of F(1) is coupled via a rotary mechanism of the central stalk subunits to proton translocation. Component of the F(0) channel, it forms part of the peripheral stalk, linking F(1) to F(0). This chain is ATP synthase subunit b 1, found in Cereibacter sphaeroides (strain ATCC 17025 / ATH 2.4.3) (Rhodobacter sphaeroides).